Here is a 453-residue protein sequence, read N- to C-terminus: Ribulose bisphosphate carboxylase large chain (453 aa).

A propeptide spanning residues 1-2 is cleaved from the precursor; it reads MS. Pro3 carries the N-acetylproline modification. Position 14 is an N6,N6,N6-trimethyllysine (Lys14). Positions 123 and 173 each coordinate substrate. The active-site Proton acceptor is the Lys175. Residue Lys177 participates in substrate binding. 3 residues coordinate Mg(2+): Lys201, Asp203, and Glu204. Lys201 carries the N6-carboxylysine modification. His294 functions as the Proton acceptor in the catalytic mechanism. Arg295, His327, and Ser379 together coordinate substrate.

It belongs to the RuBisCO large chain family. Type I subfamily. Heterohexadecamer of 8 large chains and 8 small chains; disulfide-linked. The disulfide link is formed within the large subunit homodimers. Mg(2+) is required as a cofactor. The disulfide bond which can form in the large chain dimeric partners within the hexadecamer appears to be associated with oxidative stress and protein turnover.

It localises to the plastid. Its subcellular location is the chloroplast. The enzyme catalyses 2 (2R)-3-phosphoglycerate + 2 H(+) = D-ribulose 1,5-bisphosphate + CO2 + H2O. It catalyses the reaction D-ribulose 1,5-bisphosphate + O2 = 2-phosphoglycolate + (2R)-3-phosphoglycerate + 2 H(+). Its function is as follows. RuBisCO catalyzes two reactions: the carboxylation of D-ribulose 1,5-bisphosphate, the primary event in carbon dioxide fixation, as well as the oxidative fragmentation of the pentose substrate in the photorespiration process. Both reactions occur simultaneously and in competition at the same active site. The sequence is that of Ribulose bisphosphate carboxylase large chain from Valantia muralis (Wall valantia).